The chain runs to 304 residues: Putative S-adenosyl-L-methionine-dependent methyltransferase MAP_3385 (304 aa).

Residues Asp-129 and 158–159 each bind S-adenosyl-L-methionine; that span reads DL.

It belongs to the UPF0677 family.

Its function is as follows. Exhibits S-adenosyl-L-methionine-dependent methyltransferase activity. This chain is Putative S-adenosyl-L-methionine-dependent methyltransferase MAP_3385, found in Mycolicibacterium paratuberculosis (strain ATCC BAA-968 / K-10) (Mycobacterium paratuberculosis).